Reading from the N-terminus, the 276-residue chain is Octanoyltransferase LipM (276 aa).

Residues 32–247 (GEVAPTLRFY…GFEDALQLTF (216 aa)) enclose the BPL/LPL catalytic domain. Cysteine 149 (acyl-thioester intermediate) is an active-site residue.

The protein belongs to the octanoyltransferase LipM family. As to quaternary structure, monomer.

It carries out the reaction octanoyl-[ACP] + L-lysyl-[protein] = N(6)-octanoyl-L-lysyl-[protein] + holo-[ACP] + H(+). The protein operates within protein modification; protein lipoylation via endogenous pathway; protein N(6)-(lipoyl)lysine from octanoyl-[acyl-carrier-protein]. In terms of biological role, catalyzes the transfer of endogenously produced octanoic acid from octanoyl-acyl-carrier-protein onto the lipoyl domain of GcvH, an intermediate carrier during protein lipoylation. The chain is Octanoyltransferase LipM from Exiguobacterium sibiricum (strain DSM 17290 / CCUG 55495 / CIP 109462 / JCM 13490 / 255-15).